The primary structure comprises 435 residues: Protein GOLM2 (435 aa).

At methionine 1 the chain carries N-acetylmethionine. At methionine 1–proline 14 the chain is on the cytoplasmic side. A helical; Signal-anchor for type II membrane protein transmembrane segment spans residues serine 15–isoleucine 35. The stretch at isoleucine 35–threonine 194 forms a coiled coil. Residues serine 36 to leucine 435 lie on the Lumenal side of the membrane. Basic and acidic residues-rich tracts occupy residues glutamine 191–alanine 212 and aspartate 223–lysine 239. 2 disordered regions span residues glutamine 191 to lysine 239 and proline 271 to leucine 435. Serine 232 carries the phosphoserine modification. Polar residues-rich tracts occupy residues glutamine 282–serine 294 and histidine 302–leucine 320. Residues alanine 343–aspartate 361 show a composition bias toward basic and acidic residues. Serine 365 is subject to Phosphoserine. The segment covering tyrosine 398–arginine 417 has biased composition (acidic residues). Residues aspartate 425–leucine 435 are compositionally biased toward basic and acidic residues.

It belongs to the GOLM family.

It localises to the membrane. This is Protein GOLM2 from Mus musculus (Mouse).